The following is a 271-amino-acid chain: Formamidopyrimidine-DNA glycosylase (271 aa).

The active-site Schiff-base intermediate with DNA is Pro2. Glu3 serves as the catalytic Proton donor. Catalysis depends on Lys58, which acts as the Proton donor; for beta-elimination activity. Positions 92, 111, and 152 each coordinate DNA. The FPG-type zinc-finger motif lies at 237–271 (YVYGKVQKPCRICNNIITLIRQNGRSTYFCNACQN). Arg261 acts as the Proton donor; for delta-elimination activity in catalysis.

It belongs to the FPG family. In terms of assembly, monomer. Zn(2+) is required as a cofactor.

The enzyme catalyses Hydrolysis of DNA containing ring-opened 7-methylguanine residues, releasing 2,6-diamino-4-hydroxy-5-(N-methyl)formamidopyrimidine.. The catalysed reaction is 2'-deoxyribonucleotide-(2'-deoxyribose 5'-phosphate)-2'-deoxyribonucleotide-DNA = a 3'-end 2'-deoxyribonucleotide-(2,3-dehydro-2,3-deoxyribose 5'-phosphate)-DNA + a 5'-end 5'-phospho-2'-deoxyribonucleoside-DNA + H(+). Functionally, involved in base excision repair of DNA damaged by oxidation or by mutagenic agents. Acts as a DNA glycosylase that recognizes and removes damaged bases. Has a preference for oxidized purines, such as 7,8-dihydro-8-oxoguanine (8-oxoG). Has AP (apurinic/apyrimidinic) lyase activity and introduces nicks in the DNA strand. Cleaves the DNA backbone by beta-delta elimination to generate a single-strand break at the site of the removed base with both 3'- and 5'-phosphates. The chain is Formamidopyrimidine-DNA glycosylase from Wolbachia pipientis subsp. Culex pipiens (strain wPip).